A 56-amino-acid chain; its full sequence is Serine protease inhibitor Kazal-type 1 (56 aa).

A Kazal-like domain is found at 3 to 56 (PQREATCTSEVSGCPKIYNPVCGTDGITYSNECVLCSENKKRQTPVLIQKSGPC). Cystine bridges form between Cys-9-Cys-38, Cys-16-Cys-35, and Cys-24-Cys-56.

The protein localises to the secreted. Its function is as follows. Serine protease inhibitor which exhibits anti-trypsin activity. In the pancreas, protects against trypsin-catalyzed premature activation of zymogens. Functionally, in the male reproductive tract, binds to sperm heads where it modulates sperm capacitance by inhibiting calcium uptake and nitrogen oxide (NO) production. The chain is Serine protease inhibitor Kazal-type 1 (SPINK1) from Sus scrofa (Pig).